A 661-amino-acid polypeptide reads, in one-letter code: Ubiquitin-associated and SH3 domain-containing protein A (661 aa).

The 46-residue stretch at 15 to 60 folds into the UBA domain; that stretch reads KLKSRSSPSLLEPLLAMGFPVHTALKALAATGRKTAEEALAWLHDH. The region spanning 276-341 is the SH3 domain; it reads VHYQTLRALF…PENYTDRASE (66 aa). The phosphatase-like stretch occupies residues 395-661; that stretch reads RKSVLVVRHG…FNWRNWISGN (267 aa).

As to quaternary structure, homodimer or homooligomer. Interacts with CBL. Part of a complex containing CBL and activated EGFR. Interacts with ubiquitin and with mono-ubiquitinated proteins. Interacts with dynamin. Highest expression of UBASH3A in tissues belonging to the immune system, including spleen, peripheral blood leukocytes, thymus and bone marrow.

Its subcellular location is the cytoplasm. It is found in the nucleus. Interferes with CBL-mediated down-regulation and degradation of receptor-type tyrosine kinases. Promotes accumulation of activated target receptors, such as T-cell receptors, EGFR and PDGFRB, on the cell surface. Exhibits negligible protein tyrosine phosphatase activity at neutral pH. May act as a dominant-negative regulator of UBASH3B-dependent dephosphorylation. May inhibit dynamin-dependent endocytic pathways by functionally sequestering dynamin via its SH3 domain. This chain is Ubiquitin-associated and SH3 domain-containing protein A (UBASH3A), found in Homo sapiens (Human).